Consider the following 126-residue polypeptide: Small ribosomal subunit protein bS6 (126 aa).

Residues 107 to 126 form a disordered region; the sequence is RDRERGERSERPRDDFAPAA.

This sequence belongs to the bacterial ribosomal protein bS6 family.

Its function is as follows. Binds together with bS18 to 16S ribosomal RNA. This is Small ribosomal subunit protein bS6 from Caulobacter sp. (strain K31).